The chain runs to 116 residues: U16-barytoxin-Tl1f (116 aa).

The N-terminal stretch at 1–20 is a signal peptide; that stretch reads MKTIIVFLSLLVLATKFGDA. Residues 21 to 74 constitute a propeptide that is removed on maturation; that stretch reads NEGVNQEQMKEVIQNEFREDFLNEMAAMSLLQQLEAIESTLLEKEADRNSRQKR. Disulfide bonds link C75/C90, C82/C95, and C89/C110. A glycan (N-linked (GlcNAc...) asparagine) is linked at N85.

The protein belongs to the neurotoxin 14 (magi-1) family. 06 (ICK-Trit) subfamily. Expressed by the venom gland.

It localises to the secreted. In terms of biological role, ion channel inhibitor. This chain is U16-barytoxin-Tl1f, found in Trittame loki (Brush-footed trapdoor spider).